A 264-amino-acid polypeptide reads, in one-letter code: Thymidylate synthase (264 aa).

R21 provides a ligand contact to dUMP. (6R)-5,10-methylene-5,6,7,8-tetrahydrofolate is bound at residue H51. Residue 126-127 (RR) coordinates dUMP. Residue C146 is the Nucleophile of the active site. DUMP contacts are provided by residues 166–169 (RSAD), N177, and 207–209 (HLY). Residue D169 coordinates (6R)-5,10-methylene-5,6,7,8-tetrahydrofolate. A263 contributes to the (6R)-5,10-methylene-5,6,7,8-tetrahydrofolate binding site.

This sequence belongs to the thymidylate synthase family. Bacterial-type ThyA subfamily. Homodimer.

The protein localises to the cytoplasm. The catalysed reaction is dUMP + (6R)-5,10-methylene-5,6,7,8-tetrahydrofolate = 7,8-dihydrofolate + dTMP. The protein operates within pyrimidine metabolism; dTTP biosynthesis. Its function is as follows. Catalyzes the reductive methylation of 2'-deoxyuridine-5'-monophosphate (dUMP) to 2'-deoxythymidine-5'-monophosphate (dTMP) while utilizing 5,10-methylenetetrahydrofolate (mTHF) as the methyl donor and reductant in the reaction, yielding dihydrofolate (DHF) as a by-product. This enzymatic reaction provides an intracellular de novo source of dTMP, an essential precursor for DNA biosynthesis. The sequence is that of Thymidylate synthase from Bdellovibrio bacteriovorus (strain ATCC 15356 / DSM 50701 / NCIMB 9529 / HD100).